A 253-amino-acid polypeptide reads, in one-letter code: Ubiquinone/menaquinone biosynthesis C-methyltransferase UbiE (253 aa).

S-adenosyl-L-methionine contacts are provided by residues T76, D97, and 125–126 (NA).

This sequence belongs to the class I-like SAM-binding methyltransferase superfamily. MenG/UbiE family.

It carries out the reaction a 2-demethylmenaquinol + S-adenosyl-L-methionine = a menaquinol + S-adenosyl-L-homocysteine + H(+). It catalyses the reaction a 2-methoxy-6-(all-trans-polyprenyl)benzene-1,4-diol + S-adenosyl-L-methionine = a 5-methoxy-2-methyl-3-(all-trans-polyprenyl)benzene-1,4-diol + S-adenosyl-L-homocysteine + H(+). The protein operates within quinol/quinone metabolism; menaquinone biosynthesis; menaquinol from 1,4-dihydroxy-2-naphthoate: step 2/2. Its pathway is cofactor biosynthesis; ubiquinone biosynthesis. Its function is as follows. Methyltransferase required for the conversion of demethylmenaquinol (DMKH2) to menaquinol (MKH2) and the conversion of 2-polyprenyl-6-methoxy-1,4-benzoquinol (DDMQH2) to 2-polyprenyl-3-methyl-6-methoxy-1,4-benzoquinol (DMQH2). This is Ubiquinone/menaquinone biosynthesis C-methyltransferase UbiE from Bradyrhizobium diazoefficiens (strain JCM 10833 / BCRC 13528 / IAM 13628 / NBRC 14792 / USDA 110).